Reading from the N-terminus, the 376-residue chain is MSSEVDSNSHHAAVVIDNGSGVCKAGFSPEDTPRAVFPSIVGRPRHLNVLLDSVIGDSVIGEAAARKRGILTLKYPIEHGMVKNWDEMEMVWQHTYELLRADPMDLPALLTEAPLNPKKNREKMTEIMFEHFQVPAFYVAVQAVLSLYATGRTVGIVVDSGDGVTHTVPIYEGFALPHACVRVDLAGRDLTDYLCKLLLERGVTMGTSAEREIVREIKEKLCYVSMNYAKEMDLHGKVETYELPDGQKIVLGCERFRCPEALFQPSLLGQEVMGIHEATHHSITNCDMDLRKDMYANIVLSGGTTMFRNIEHRFLQDLTEMAPPSIRIKVNASPDRRFSVWTGGSVLASLTSFQNMWIDSLEYEEVGSAIVHRKCF.

The segment at 1–40 is necessary and sufficient for recruitment to the fusome and actin cones of spermatocyte cysts; that stretch reads MSSEVDSNSHHAAVVIDNGSGVCKAGFSPEDTPRAVFPSI.

This sequence belongs to the actin family. ARP1 subfamily. In terms of tissue distribution, high expression in males whereas expression in females is very low. In adult males, highest levels of expression are in the testis. In adult females, expressed only in the ovaries at very low levels. In larvae, highly expressed in the imaginal disk whereas in prepupae and pupae modest levels of expression occur in the fat body.

It is found in the cytoplasm. The protein resides in the cytoskeleton. Its function is as follows. Required for optimal embryo development, particularly under heat stress conditions. Also appears to have a role in negatively regulating spermatocyte cyst development. Under heat stress conditions, required for the correct organization and migration of nuclei during early embryogenesis, and therefore possibly functions by regulating embryonic actin networks during the heat stress response. The protein is Actin-like protein 53D of Drosophila melanogaster (Fruit fly).